The following is a 276-amino-acid chain: Rhomboid-type serine protease 2 (276 aa).

A run of 5 helical transmembrane segments spans residues Leu27–Val47, Phe77–Leu97, Thr109–Val129, Phe132–Gly152, and Trp175–Leu195. The active-site Nucleophile is the Ser144. His197 is an active-site residue. The chain crosses the membrane as a helical span at residues Leu198–Pro218.

The protein belongs to the peptidase S54 family.

Its subcellular location is the golgi apparatus membrane. It is found in the golgi apparatus. The protein localises to the cis-Golgi network membrane. It carries out the reaction Cleaves type-1 transmembrane domains using a catalytic dyad composed of serine and histidine that are contributed by different transmembrane domains.. Its function is as follows. Probable rhomboid-type serine protease that catalyzes intramembrane proteolysis. The chain is Rhomboid-type serine protease 2 (rbd-2) from Neurospora crassa (strain ATCC 24698 / 74-OR23-1A / CBS 708.71 / DSM 1257 / FGSC 987).